Consider the following 295-residue polypeptide: Nucleotide-binding protein EF_0766 (295 aa).

12–19 (GMSGAGKT) contributes to the ATP binding site. GTP is bound at residue 62-65 (DLRS).

It belongs to the RapZ-like family.

Displays ATPase and GTPase activities. This is Nucleotide-binding protein EF_0766 from Enterococcus faecalis (strain ATCC 700802 / V583).